An 81-amino-acid polypeptide reads, in one-letter code: ATP synthase subunit c (81 aa).

Helical transmembrane passes span 6-26 (AAASVIAAALAVGLAAIGPGF) and 57-77 (LAFMESLTIYGLVIALVLLFA).

Belongs to the ATPase C chain family. In terms of assembly, F-type ATPases have 2 components, F(1) - the catalytic core - and F(0) - the membrane proton channel. F(1) has five subunits: alpha(3), beta(3), gamma(1), delta(1), epsilon(1). F(0) has four main subunits: a(1), b(1), b'(1) and c(10-14). The alpha and beta chains form an alternating ring which encloses part of the gamma chain. F(1) is attached to F(0) by a central stalk formed by the gamma and epsilon chains, while a peripheral stalk is formed by the delta, b and b' chains.

It localises to the cellular thylakoid membrane. Its function is as follows. F(1)F(0) ATP synthase produces ATP from ADP in the presence of a proton or sodium gradient. F-type ATPases consist of two structural domains, F(1) containing the extramembraneous catalytic core and F(0) containing the membrane proton channel, linked together by a central stalk and a peripheral stalk. During catalysis, ATP synthesis in the catalytic domain of F(1) is coupled via a rotary mechanism of the central stalk subunits to proton translocation. In terms of biological role, key component of the F(0) channel; it plays a direct role in translocation across the membrane. A homomeric c-ring of between 10-14 subunits forms the central stalk rotor element with the F(1) delta and epsilon subunits. The sequence is that of ATP synthase subunit c from Rippkaea orientalis (strain PCC 8801 / RF-1) (Cyanothece sp. (strain PCC 8801)).